The primary structure comprises 321 residues: Probable membrane-associated kinase regulator 3 (321 aa).

Over residues Lys-297–Thr-314 the composition is skewed to polar residues. The tract at residues Lys-297–Asp-321 is disordered.

It localises to the cell membrane. This Arabidopsis thaliana (Mouse-ear cress) protein is Probable membrane-associated kinase regulator 3 (MAKR3).